Consider the following 363-residue polypeptide: Phosphoserine aminotransferase (363 aa).

Arg-42 serves as a coordination point for L-glutamate. Pyridoxal 5'-phosphate contacts are provided by residues 76-77 (GR), Trp-102, Thr-156, Asp-175, and Gln-198. Lys-199 carries the post-translational modification N6-(pyridoxal phosphate)lysine. Position 240–241 (240–241 (NT)) interacts with pyridoxal 5'-phosphate.

The protein belongs to the class-V pyridoxal-phosphate-dependent aminotransferase family. SerC subfamily. Homodimer. Pyridoxal 5'-phosphate is required as a cofactor.

It is found in the cytoplasm. The enzyme catalyses O-phospho-L-serine + 2-oxoglutarate = 3-phosphooxypyruvate + L-glutamate. It catalyses the reaction 4-(phosphooxy)-L-threonine + 2-oxoglutarate = (R)-3-hydroxy-2-oxo-4-phosphooxybutanoate + L-glutamate. The protein operates within amino-acid biosynthesis; L-serine biosynthesis; L-serine from 3-phospho-D-glycerate: step 2/3. It functions in the pathway cofactor biosynthesis; pyridoxine 5'-phosphate biosynthesis; pyridoxine 5'-phosphate from D-erythrose 4-phosphate: step 3/5. Functionally, catalyzes the reversible conversion of 3-phosphohydroxypyruvate to phosphoserine and of 3-hydroxy-2-oxo-4-phosphonooxybutanoate to phosphohydroxythreonine. This Shewanella frigidimarina (strain NCIMB 400) protein is Phosphoserine aminotransferase.